A 209-amino-acid chain; its full sequence is Ribose 1,5-bisphosphate phosphokinase PhnN (209 aa).

Residue 27–34 (GPSGGGKD) coordinates ATP.

This sequence belongs to the ribose 1,5-bisphosphokinase family.

The enzyme catalyses alpha-D-ribose 1,5-bisphosphate + ATP = 5-phospho-alpha-D-ribose 1-diphosphate + ADP. It functions in the pathway metabolic intermediate biosynthesis; 5-phospho-alpha-D-ribose 1-diphosphate biosynthesis; 5-phospho-alpha-D-ribose 1-diphosphate from D-ribose 5-phosphate (route II): step 3/3. In terms of biological role, catalyzes the phosphorylation of ribose 1,5-bisphosphate to 5-phospho-D-ribosyl alpha-1-diphosphate (PRPP). This chain is Ribose 1,5-bisphosphate phosphokinase PhnN, found in Chelativorans sp. (strain BNC1).